The chain runs to 242 residues: tRNA (guanine-N(1)-)-methyltransferase (242 aa).

Residues Gly111 and 130-135 (IGDYVL) each bind S-adenosyl-L-methionine.

Belongs to the RNA methyltransferase TrmD family. As to quaternary structure, homodimer.

The protein resides in the cytoplasm. The enzyme catalyses guanosine(37) in tRNA + S-adenosyl-L-methionine = N(1)-methylguanosine(37) in tRNA + S-adenosyl-L-homocysteine + H(+). Specifically methylates guanosine-37 in various tRNAs. The chain is tRNA (guanine-N(1)-)-methyltransferase from Aster yellows witches'-broom phytoplasma (strain AYWB).